A 302-amino-acid polypeptide reads, in one-letter code: 4-hydroxy-tetrahydrodipicolinate synthase (302 aa).

Residue threonine 55 coordinates pyruvate. Tyrosine 144 (proton donor/acceptor) is an active-site residue. Residue lysine 172 is the Schiff-base intermediate with substrate of the active site. Valine 214 is a pyruvate binding site.

The protein belongs to the DapA family. In terms of assembly, homotetramer; dimer of dimers.

It localises to the cytoplasm. The catalysed reaction is L-aspartate 4-semialdehyde + pyruvate = (2S,4S)-4-hydroxy-2,3,4,5-tetrahydrodipicolinate + H2O + H(+). It functions in the pathway amino-acid biosynthesis; L-lysine biosynthesis via DAP pathway; (S)-tetrahydrodipicolinate from L-aspartate: step 3/4. Catalyzes the condensation of (S)-aspartate-beta-semialdehyde [(S)-ASA] and pyruvate to 4-hydroxy-tetrahydrodipicolinate (HTPA). The protein is 4-hydroxy-tetrahydrodipicolinate synthase of Parasynechococcus marenigrum (strain WH8102).